The primary structure comprises 686 residues: tRNA wybutosine-synthesizing protein 4 (686 aa).

The disordered stretch occupies residues 1–22; the sequence is MGPRSRQRRTGTVQSTNDSSSL. Residues 10–22 are compositionally biased toward polar residues; the sequence is TGTVQSTNDSSSL. S-adenosyl-L-methionine is bound by residues arginine 59, glycine 89, aspartate 114, 161–162, and glutamate 188; that span reads DL.

It belongs to the methyltransferase superfamily. LCMT family. Interacts with RNF144B/IBRDC2.

It carries out the reaction 7-[(3S)-3-amino-3-carboxypropyl]wyosine(37) in tRNA(Phe) + S-adenosyl-L-methionine = 7-[(3S)-(3-amino-3-methoxycarbonyl)propyl]wyosine(37) in tRNA(Phe) + S-adenosyl-L-homocysteine. The catalysed reaction is 7-[(3S)-(3-amino-3-methoxycarbonyl)propyl]wyosine(37) in tRNA(Phe) + S-adenosyl-L-methionine + CO2 = wybutosine(37) in tRNA(Phe) + S-adenosyl-L-homocysteine + 2 H(+). The protein operates within tRNA modification; wybutosine-tRNA(Phe) biosynthesis. In terms of biological role, probable S-adenosyl-L-methionine-dependent methyltransferase that acts as a component of the wybutosine biosynthesis pathway. Wybutosine is a hyper modified guanosine with a tricyclic base found at the 3'-position adjacent to the anticodon of eukaryotic phenylalanine tRNA. May methylate the carboxyl group of leucine residues to form alpha-leucine ester residues. The sequence is that of tRNA wybutosine-synthesizing protein 4 (Lcmt2) from Rattus norvegicus (Rat).